Here is a 428-residue protein sequence, read N- to C-terminus: G2/mitotic-specific cyclin-1 (428 aa).

Residues 1 to 22 (MKFSEEKNVSNNPTNFEGGLDS) are disordered.

This sequence belongs to the cyclin family. Cyclin AB subfamily. Interacts with the CDC2 protein kinase to form a serine/threonine kinase holoenzyme complex also known as maturation promoting factor (MPF). The cyclin subunit imparts substrate specificity to the complex.

In terms of biological role, essential for the control of the cell cycle at the G2/M (mitosis) transition. This is G2/mitotic-specific cyclin-1 from Medicago sativa subsp. varia (Alfalfa).